The following is a 140-amino-acid chain: Acyl-coenzyme A thioesterase 13 (140 aa).

Position 1 is an N-acetylmethionine (methionine 1). Residue threonine 2 is modified to N-acetylthreonine; in Acyl-coenzyme A thioesterase 13, N-terminally processed. 3 positions are modified to N6-acetyllysine: lysine 27, lysine 37, and lysine 43. Residue glutamate 46 coordinates CoA. Asparagine 50 and glycine 81 together coordinate substrate. CoA is bound by residues serine 83, 90–95 (YMSPAK), and 108–113 (KQGKTL). Residues lysine 108 and lysine 127 each carry the N6-acetyllysine modification. Histidine 137 serves as a coordination point for CoA.

The protein belongs to the thioesterase PaaI family. Homotetramer. Interacts with PCTP.

Its subcellular location is the cytoplasm. It is found in the cytosol. The protein localises to the mitochondrion. The protein resides in the nucleus. It localises to the cytoskeleton. Its subcellular location is the spindle. The enzyme catalyses a fatty acyl-CoA + H2O = a fatty acid + CoA + H(+). It carries out the reaction decanoyl-CoA + H2O = decanoate + CoA + H(+). The catalysed reaction is octanoyl-CoA + H2O = octanoate + CoA + H(+). It catalyses the reaction butanoyl-CoA + H2O = butanoate + CoA + H(+). The enzyme catalyses hexanoyl-CoA + H2O = hexanoate + CoA + H(+). It carries out the reaction tetradecanoyl-CoA + H2O = tetradecanoate + CoA + H(+). The catalysed reaction is hexadecanoyl-CoA + H2O = hexadecanoate + CoA + H(+). It catalyses the reaction dodecanoyl-CoA + H2O = dodecanoate + CoA + H(+). The enzyme catalyses (9Z)-octadecenoyl-CoA + H2O = (9Z)-octadecenoate + CoA + H(+). It carries out the reaction (5Z,8Z,11Z,14Z)-eicosatetraenoyl-CoA + H2O = (5Z,8Z,11Z,14Z)-eicosatetraenoate + CoA + H(+). In terms of biological role, catalyzes the hydrolysis of acyl-CoAs into free fatty acids and coenzyme A (CoASH), regulating their respective intracellular levels. Has acyl-CoA thioesterase activity towards medium (C12) and long-chain (C18) fatty acyl-CoA substrates. Can also hydrolyze 3-hydroxyphenylacetyl-CoA and 3,4-dihydroxyphenylacetyl-CoA (in vitro). May play a role in controlling adaptive thermogenesis. This is Acyl-coenzyme A thioesterase 13 from Homo sapiens (Human).